The sequence spans 991 residues: Envelope glycoprotein gp160 (991 aa).

Residues 1-106 (MTSKESKPSR…CLMWEMRKGN (106 aa)) form the signal peptide. Topologically, residues 107 to 840 (QCQAEEVIAL…WSSWFSWLKY (734 aa)) are extracellular. 22 N-linked (GlcNAc...) asparagine; by host glycosylation sites follow: Asn140, Asn161, Asn206, Asn258, Asn298, Asn364, Asn381, Asn387, Asn403, Asn435, Asn439, Asn470, Asn475, Asn481, Asn491, Asn501, Asn515, Asn527, Asn537, Asn542, Asn543, and Asn568. Residues 665-685 (GIGLVIVLAIMAIIAAAGAGL) are fusion peptide. A coiled-coil region spans residues 697–747 (RTAVQSLANATAAQQEVLEASYAMVQHIAKGIRILEARVARVEALVDRMMV). A glycan (N-linked (GlcNAc...) asparagine; by host) is linked at Asn705. The segment at 731-747 (LEARVARVEALVDRMMV) is immunosuppression. Asn773, Asn780, Asn796, and Asn830 each carry an N-linked (GlcNAc...) asparagine; by host glycan. Residues 788–823 (EEIEQHEGNLSLLLREAALQVHIAQRDARRIPDAWK) are a coiled coil. Residues 841 to 861 (VPWIIMGIVGLICFRILMCVI) traverse the membrane as a helical segment. The Cytoplasmic portion of the chain corresponds to 862 to 991 (SMCLQAYKQV…PTLENDYVEL (130 aa)). Cys864 is lipidated: S-palmitoyl cysteine; by host.

As to quaternary structure, the mature envelope protein (Env) consists of a trimer of SU-TM heterodimers attached by noncovalent interactions or by a labile interchain disulfide bond. Post-translationally, specific enzymatic cleavages in vivo yield mature proteins. Envelope glycoproteins are synthesized as an inactive precursor that is N-glycosylated and processed likely by host cell furin or by a furin-like protease in the Golgi to yield the mature SU and TM proteins. The cleavage site between SU and TM requires the minimal sequence [KR]-X-[KR]-R. In terms of processing, the transmembrane protein is palmitoylated.

It localises to the virion membrane. The protein resides in the host cell membrane. The surface protein (SU) attaches the virus to the host cell by binding to its receptor. This interaction triggers the refolding of the transmembrane protein (TM) and is thought to activate its fusogenic potential by unmasking its fusion peptide. Fusion occurs at the host cell plasma membrane. In terms of biological role, the transmembrane protein (TM) acts as a class I viral fusion protein. Under the current model, the protein has at least 3 conformational states: pre-fusion native state, pre-hairpin intermediate state, and post-fusion hairpin state. During viral and target cell membrane fusion, the coiled coil regions (heptad repeats) assume a trimer-of-hairpins structure, positioning the fusion peptide in close proximity to the C-terminal region of the ectodomain. The formation of this structure appears to drive apposition and subsequent fusion of viral and target cell membranes. Membranes fusion leads to delivery of the nucleocapsid into the cytoplasm. This chain is Envelope glycoprotein gp160 (env), found in Ovis aries (Sheep).